A 253-amino-acid polypeptide reads, in one-letter code: Phycoerythrobilin:ferredoxin oxidoreductase (253 aa).

This sequence belongs to the HY2 family.

The catalysed reaction is (3Z)-phycoerythrobilin + oxidized 2[4Fe-4S]-[ferredoxin] = 15,16-dihydrobiliverdin + reduced 2[4Fe-4S]-[ferredoxin] + 2 H(+). Catalyzes the two-electron reduction of the C2 and C3(1) diene system of 15,16-dihydrobiliverdin. The chain is Phycoerythrobilin:ferredoxin oxidoreductase from Prochlorococcus marinus (strain AS9601).